A 609-amino-acid chain; its full sequence is X-ray repair cross-complementing protein 6 (609 aa).

The segment at 1–28 (MSGWESYYKTEGDEEAEEEQEENLEASG) is disordered. N-acetylserine is present on Ser-2. The residue at position 2 (Ser-2) is a Phosphoserine. A Phosphoserine; by PRKDC modification is found at Ser-6. Residues 12–24 (GDEEAEEEQEENL) show a composition bias toward acidic residues. Position 27 is a phosphoserine (Ser-27). Lys-31 acts as the Schiff-base intermediate with DNA; for 5'-deoxyribose-5-phosphate lyase activity in catalysis. Lys-31 carries the post-translational modification N6-acetyllysine. A Phosphoserine; by PRKDC modification is found at Ser-51. In terms of domain architecture, Ku spans 261 to 468 (LKLNKDIVIS…VGKMKAIVEK (208 aa)). Residues 277–341 (VQKALKPPPI…EETEELKRFD (65 aa)) are DNA-binding. Lys-287 is covalently cross-linked (Glycyl lysine isopeptide (Lys-Gly) (interchain with G-Cter in SUMO2)). Ser-306 is modified (phosphoserine). An N6-acetyllysine mark is found at Lys-317, Lys-331, and Lys-338. Lys-317 is covalently cross-linked (Glycyl lysine isopeptide (Lys-Gly) (interchain with G-Cter in SUMO2)). An interaction with XRCC5 region spans residues 373-482 (SLVIGSSTLF…YRSDSFENPV (110 aa)). A Phosphothreonine modification is found at Thr-455. Lys-461 bears the N6-acetyllysine mark. Residues Ser-477 and Ser-520 each carry the phosphoserine modification. The tract at residues 536 to 562 (PEGKVTKRKHDNEGSGSKRPKVEYSEE) is disordered. N6-acetyllysine occurs at positions 539, 542, and 544. Ser-550 carries the phosphoserine modification. Positions 550 to 609 (SGSKRPKVEYSEEELKTHISKGTLGKFTVPMLKEACRAYGLKSGLKKQELLEALTKHFQD) are interaction with DEAF1. N6-acetyllysine is present on residues Lys-553 and Lys-556. Lys-556 participates in a covalent cross-link: Glycyl lysine isopeptide (Lys-Gly) (interchain with G-Cter in SUMO2). Ser-560 carries the post-translational modification Phosphoserine. Lys-570 carries the N6,N6,N6-trimethyllysine modification. Positions 573-607 (LGKFTVPMLKEACRAYGLKSGLKKQELLEALTKHF) constitute an SAP domain. An interaction with BAX region spans residues 578–583 (VPMLKE).

It belongs to the ku70 family. As to quaternary structure, forms a heterodimer with XRCC5/Ku80; heterodimerization stabilizes XRCC5 protein. Component of the core long-range non-homologous end joining (NHEJ) complex (also named DNA-PK complex) composed of PRKDC, LIG4, XRCC4, XRCC6/Ku70, XRCC5/Ku86 and NHEJ1/XLF. Additional component of the NHEJ complex includes PAXX. Following autophosphorylation, PRKDC dissociates from DNA, leading to formation of the short-range NHEJ complex, composed of LIG4, XRCC4, XRCC6/Ku70, XRCC5/Ku86 and NHEJ1/XLF. The XRCC5-XRCC6 dimer also associates with NAA15, and this complex binds to the osteocalcin promoter and activates osteocalcin expression. In addition, XRCC6 interacts with the osteoblast-specific transcription factors MSX2, RUNX2 and DLX5. Interacts with ELF3. Interacts with ATP23. The XRCC5-XRRC6 dimer associates in a DNA-dependent manner with APEX1. Binds to CDK9 isoform 2. Identified in a complex with DEAF1 and XRCC5. Interacts with DEAF1 (via the SAND domain); the interaction is direct and may be inhibited by DNA-binding. Interacts with CLU. Interacts with NR4A3; the DNA-dependent protein kinase complex DNA-PK phosphorylates and activates NR4A3 and prevents NR4A3 ubiquitinylation and degradation. Interacts with CYREN isoform 1 (CYREN-1) and isoform 4 (CYREN-2) (via KBM motif). Interacts (via N-terminus) with HSF1 (via N-terminus); this interaction is direct and prevents XRCC5/XRCC6 heterodimeric binding and non-homologous end joining (NHEJ) repair activities induced by ionizing radiation (IR). Part of the HDP-RNP complex composed of at least HEXIM1, PRKDC, XRCC5, XRCC6, paraspeckle proteins (SFPQ, NONO, PSPC1, RBM14, and MATR3) and NEAT1 RNA. Interacts with HMBOX1. Interacts with ATF7. Interacts with APLF (via KBM motif). Interacts with WRN (via KBM motif). The XRCC5-XRCC6 dimer associates with ALKBH2. Interacts with TPRN; TPRN interacts with a number of DNA damage response proteins, is recruited to sites of DNA damage and may play a role in DNA damage repair. When not acetylated, interacts with BAX. Interacts with ERCC6L2. In terms of assembly, (Microbial infection) Interacts with human T-cell leukemia virus 1/HTLV-1 protein HBZ. In terms of processing, phosphorylation by PRKDC may enhance helicase activity. Phosphorylation of Ser-51 does not affect DNA repair. ADP-ribosylated by PARP3. Post-translationally, methylation by SETD4 leads to accumulation in the cytoplasm and is a prerequisite for acetylation, possibly due to the change of subcellular from the nucleus to the cytosol initiated by methylation, acetylation occurring in the cytosol. In terms of processing, acetylation can be catalyzed in vitro by CREBBP/CBP and KAT2B/PCAF.

The protein localises to the nucleus. It localises to the chromosome. The protein resides in the cytoplasm. Its function is as follows. Single-stranded DNA-dependent ATP-dependent helicase that plays a key role in DNA non-homologous end joining (NHEJ) by recruiting DNA-PK to DNA. Required for double-strand break repair and V(D)J recombination. Also has a role in chromosome translocation. Has a role in chromosome translocation. The DNA helicase II complex binds preferentially to fork-like ends of double-stranded DNA in a cell cycle-dependent manner. It works in the 3'-5' direction. During NHEJ, the XRCC5-XRRC6 dimer performs the recognition step: it recognizes and binds to the broken ends of the DNA and protects them from further resection. Binding to DNA may be mediated by XRCC6. The XRCC5-XRRC6 dimer acts as a regulatory subunit of the DNA-dependent protein kinase complex DNA-PK by increasing the affinity of the catalytic subunit PRKDC to DNA by 100-fold. The XRCC5-XRRC6 dimer is probably involved in stabilizing broken DNA ends and bringing them together. The assembly of the DNA-PK complex to DNA ends is required for the NHEJ ligation step. Probably also acts as a 5'-deoxyribose-5-phosphate lyase (5'-dRP lyase), by catalyzing the beta-elimination of the 5' deoxyribose-5-phosphate at an abasic site near double-strand breaks. 5'-dRP lyase activity allows to 'clean' the termini of abasic sites, a class of nucleotide damage commonly associated with strand breaks, before such broken ends can be joined. The XRCC5-XRRC6 dimer together with APEX1 acts as a negative regulator of transcription. In association with NAA15, the XRCC5-XRRC6 dimer binds to the osteocalcin promoter and activates osteocalcin expression. Plays a role in the regulation of DNA virus-mediated innate immune response by assembling into the HDP-RNP complex, a complex that serves as a platform for IRF3 phosphorylation and subsequent innate immune response activation through the cGAS-STING pathway. Negatively regulates apoptosis by interacting with BAX and sequestering it from the mitochondria. Might have deubiquitination activity, acting on BAX. The protein is X-ray repair cross-complementing protein 6 (XRCC6) of Homo sapiens (Human).